The chain runs to 330 residues: Phospholipase C (330 aa).

An N-terminal signal peptide occupies residues 1–34 (MVKKTKSNSLKKVATLALANLLLVGALTDNSAKA). Cysteine 155 and cysteine 191 form a disulfide bridge.

Belongs to the neutral sphingomyelinase family. As to quaternary structure, monomer.

Its subcellular location is the secreted. The catalysed reaction is a 1,2-diacyl-sn-glycero-3-phosphocholine + H2O = phosphocholine + a 1,2-diacyl-sn-glycerol + H(+). Functionally, bacterial hemolysins are exotoxins that attack blood cell membranes and cause cell rupture. Beta-hemolysin is a phospholipase C with specific activity toward sphingomyelins. Has a high specificity for sphingomyelin, hydrolyzes lysophosphatidylcholine at a much lower rate, but has no activity towards phosphatidylcholine, phosphatidylethanolamine, or phosphatidylserine. This Staphylococcus aureus (strain NCTC 8325 / PS 47) protein is Phospholipase C (hlb).